Reading from the N-terminus, the 427-residue chain is Glutamate-1-semialdehyde 2,1-aminomutase (427 aa).

Position 265 is an N6-(pyridoxal phosphate)lysine (Lys265).

This sequence belongs to the class-III pyridoxal-phosphate-dependent aminotransferase family. HemL subfamily. Homodimer. Pyridoxal 5'-phosphate is required as a cofactor.

The protein localises to the cytoplasm. It catalyses the reaction (S)-4-amino-5-oxopentanoate = 5-aminolevulinate. Its pathway is porphyrin-containing compound metabolism; protoporphyrin-IX biosynthesis; 5-aminolevulinate from L-glutamyl-tRNA(Glu): step 2/2. This chain is Glutamate-1-semialdehyde 2,1-aminomutase, found in Bordetella parapertussis (strain 12822 / ATCC BAA-587 / NCTC 13253).